Reading from the N-terminus, the 33-residue chain is Kappa-sparatoxin-Hv1a (33 aa).

Disulfide bonds link Cys2–Cys17, Cys9–Cys22, and Cys16–Cys27. A Tryptophan amide modification is found at Trp33.

In terms of tissue distribution, expressed by the venom gland.

Its subcellular location is the secreted. Functionally, blocks transient outward voltage-gated potassium channels in rat ventricular myocytes (thus prolonging action-potential duration) and rat Kv4.2/KCNA4 channels expressed in Xenopus oocytes. Is also a weak blocker of calcium channels in rat cerebellar granule cells. The sequence is that of Kappa-sparatoxin-Hv1a from Heteropoda venatoria (Brown huntsman spider).